The chain runs to 283 residues: NAD kinase (283 aa).

The active-site Proton acceptor is the Asp-68. NAD(+) contacts are provided by residues 68 to 69 (DG), Arg-73, 142 to 143 (ND), Arg-153, Arg-170, Asp-172, and 183 to 188 (TAYSLS).

The protein belongs to the NAD kinase family. Requires a divalent metal cation as cofactor.

It is found in the cytoplasm. It catalyses the reaction NAD(+) + ATP = ADP + NADP(+) + H(+). Involved in the regulation of the intracellular balance of NAD and NADP, and is a key enzyme in the biosynthesis of NADP. Catalyzes specifically the phosphorylation on 2'-hydroxyl of the adenosine moiety of NAD to yield NADP. In Symbiobacterium thermophilum (strain DSM 24528 / JCM 14929 / IAM 14863 / T), this protein is NAD kinase.